The following is a 587-amino-acid chain: ATP-dependent lipid A-core flippase (587 aa).

5 helical membrane-spanning segments follow: residues 31 to 51 (LIAS…LIYL), 68 to 88 (LKIM…TNFI), 145 to 165 (GSLI…AVMF), 169 to 189 (WELT…ITIV), and 259 to 279 (VQII…TPLI). The ABC transmembrane type-1 domain occupies 32 to 315 (IASGIALVFN…LTNVNSQFQR (284 aa)). Positions 347-583 (LEFKNVSFAY…NGAYKQLYSM (237 aa)) constitute an ABC transporter domain. Position 381-388 (381-388 (GRSGSGKS)) interacts with ATP.

This sequence belongs to the ABC transporter superfamily. Lipid exporter (TC 3.A.1.106) family. As to quaternary structure, homodimer.

It is found in the cell inner membrane. It catalyses the reaction ATP + H2O + lipid A-core oligosaccharideSide 1 = ADP + phosphate + lipid A-core oligosaccharideSide 2.. Its function is as follows. Involved in lipopolysaccharide (LPS) biosynthesis. Translocates lipid A-core from the inner to the outer leaflet of the inner membrane. Transmembrane domains (TMD) form a pore in the inner membrane and the ATP-binding domain (NBD) is responsible for energy generation. This Haemophilus influenzae (strain 86-028NP) protein is ATP-dependent lipid A-core flippase.